We begin with the raw amino-acid sequence, 452 residues long: 23S rRNA (uracil(1939)-C(5))-methyltransferase RlmD (452 aa).

The tract at residues 1 to 23 is disordered; the sequence is MSRKKSNGGLRFQPAGGNRATQI. Residues 22 to 80 form the TRAM domain; sequence QIPVGKKQRLLIERVAGDGRGIAFIEGRTWFVSGALGGEEVEARVLGARGKVVEARLER. Residues Cys-93, Cys-99, Cys-102, and Cys-181 each contribute to the [4Fe-4S] cluster site. Residues Gln-285, Phe-314, Asn-319, Glu-335, Asp-362, and Asp-383 each coordinate S-adenosyl-L-methionine. The active-site Nucleophile is the Cys-409.

This sequence belongs to the class I-like SAM-binding methyltransferase superfamily. RNA M5U methyltransferase family. RlmD subfamily.

The catalysed reaction is uridine(1939) in 23S rRNA + S-adenosyl-L-methionine = 5-methyluridine(1939) in 23S rRNA + S-adenosyl-L-homocysteine + H(+). Catalyzes the formation of 5-methyl-uridine at position 1939 (m5U1939) in 23S rRNA. This is 23S rRNA (uracil(1939)-C(5))-methyltransferase RlmD from Pseudomonas entomophila (strain L48).